Consider the following 226-residue polypeptide: ATP synthase F(0) complex subunit a (226 aa).

6 consecutive transmembrane segments (helical) span residues 6–26 (FAPF…IITF), 68–88 (WTLM…LGLL), 97–117 (QLSM…IMGF), 138–158 (IPML…ALAV), 164–184 (ITAG…LSSI), and 195–215 (ILFL…YVFT).

It belongs to the ATPase A chain family. Component of the ATP synthase complex composed at least of ATP5F1A/subunit alpha, ATP5F1B/subunit beta, ATP5MC1/subunit c (homooctomer), MT-ATP6/subunit a, MT-ATP8/subunit 8, ATP5ME/subunit e, ATP5MF/subunit f, ATP5MG/subunit g, ATP5MK/subunit k, ATP5MJ/subunit j, ATP5F1C/subunit gamma, ATP5F1D/subunit delta, ATP5F1E/subunit epsilon, ATP5PF/subunit F6, ATP5PB/subunit b, ATP5PD/subunit d, ATP5PO/subunit OSCP. ATP synthase complex consists of a soluble F(1) head domain (subunits alpha(3) and beta(3)) - the catalytic core - and a membrane F(0) domain - the membrane proton channel (subunits c, a, 8, e, f, g, k and j). These two domains are linked by a central stalk (subunits gamma, delta, and epsilon) rotating inside the F1 region and a stationary peripheral stalk (subunits F6, b, d, and OSCP). Interacts with DNAJC30; interaction is direct.

The protein localises to the mitochondrion inner membrane. The catalysed reaction is H(+)(in) = H(+)(out). Subunit a, of the mitochondrial membrane ATP synthase complex (F(1)F(0) ATP synthase or Complex V) that produces ATP from ADP in the presence of a proton gradient across the membrane which is generated by electron transport complexes of the respiratory chain. ATP synthase complex consist of a soluble F(1) head domain - the catalytic core - and a membrane F(1) domain - the membrane proton channel. These two domains are linked by a central stalk rotating inside the F(1) region and a stationary peripheral stalk. During catalysis, ATP synthesis in the catalytic domain of F(1) is coupled via a rotary mechanism of the central stalk subunits to proton translocation. With the subunit c (ATP5MC1), forms the proton-conducting channel in the F(0) domain, that contains two crucial half-channels (inlet and outlet) that facilitate proton movement from the mitochondrial intermembrane space (IMS) into the matrix. Protons are taken up via the inlet half-channel and released through the outlet half-channel, following a Grotthuss mechanism. The chain is ATP synthase F(0) complex subunit a from Didelphis virginiana (North American opossum).